Here is a 162-residue protein sequence, read N- to C-terminus: Beta-lactoglobulin-1 (162 aa).

Disulfide bonds link cysteine 66–cysteine 160 and cysteine 106–cysteine 119.

The protein belongs to the calycin superfamily. Lipocalin family. As to quaternary structure, monomer. As to expression, synthesized in mammary gland and secreted in milk.

It is found in the secreted. Functionally, primary component of whey, it binds retinol and is probably involved in the transport of that molecule. The chain is Beta-lactoglobulin-1 (LGB1) from Equus asinus (Donkey).